The primary structure comprises 310 residues: Glycine--tRNA ligase alpha subunit (310 aa).

This sequence belongs to the class-II aminoacyl-tRNA synthetase family. As to quaternary structure, tetramer of two alpha and two beta subunits.

The protein resides in the cytoplasm. It carries out the reaction tRNA(Gly) + glycine + ATP = glycyl-tRNA(Gly) + AMP + diphosphate. The protein is Glycine--tRNA ligase alpha subunit of Agrobacterium fabrum (strain C58 / ATCC 33970) (Agrobacterium tumefaciens (strain C58)).